A 546-amino-acid polypeptide reads, in one-letter code: MAKDVKFGIDARKQMMDGVNILANAVRVTLGPKGRNVVIDKSFGAPTITKDGVSVAKEIELENKFENMGAQLVREVASRTNDVAGDGTTTATVLAQSILQEGMKSVAAGMNPMDLKRGIDKAVRAAVEQIHLLSTPADDSKAIAQVGSISANSDTKIGELIAQAMEKVGKQGVITVEEGSSFEDTLEVVEGMQFDRGYISPYFANKQDSLTAEFENPYILLVDKKISNIREIVPLLEQVMQQSKPLLIIAEDVENEALATLVVNNMRGGLKTCAVKAPGFGDRRKAMLEDIATLTGGTVISEEIGLSLETATLEQLGTAKKVTVGKENTVIVDGAGHSADIENRVESIRRQVEESTSDYDKEKLQERMAKLAGGVAVIKVGAATETEMKEKKDRVDDALHATRAAVEEGVVPGGGVALVRAMNALSELRGDNDDQNAGINILRRAMEAPLRQIVTNSGEEASVVVNEVKSGSGNYGYNAASGEYGDMLEMGILDPAKVARSALENAASVAGLMLTTEVMITDLPQGDDGMAGMGAGGGMGGMGGMM.

ATP contacts are provided by residues 29–32, Lys50, 86–90, Gly414, 478–480, and Asp494; these read TLGP, DGTTT, and NAA.

The protein belongs to the chaperonin (HSP60) family. As to quaternary structure, forms a cylinder of 14 subunits composed of two heptameric rings stacked back-to-back. Interacts with the co-chaperonin GroES.

Its subcellular location is the cytoplasm. It catalyses the reaction ATP + H2O + a folded polypeptide = ADP + phosphate + an unfolded polypeptide.. Functionally, together with its co-chaperonin GroES, plays an essential role in assisting protein folding. The GroEL-GroES system forms a nano-cage that allows encapsulation of the non-native substrate proteins and provides a physical environment optimized to promote and accelerate protein folding. The sequence is that of Chaperonin GroEL from Psychrobacter arcticus (strain DSM 17307 / VKM B-2377 / 273-4).